The chain runs to 150 residues: Large ribosomal subunit protein bL9 (150 aa).

Belongs to the bacterial ribosomal protein bL9 family.

Functionally, binds to the 23S rRNA. This chain is Large ribosomal subunit protein bL9, found in Shewanella piezotolerans (strain WP3 / JCM 13877).